The primary structure comprises 320 residues: Holliday junction branch migration complex subunit RuvB (320 aa).

The segment at 1 to 172 (MTANVCLDES…FGIISRLEYY (172 aa)) is large ATPase domain (RuvB-L). ATP is bound by residues Arg-12, Gly-53, Lys-56, Thr-57, Thr-58, 119 to 121 (EDF), Arg-162, Tyr-172, and Arg-209. Thr-57 lines the Mg(2+) pocket. Positions 173–243 (TPADLARIVA…LASEALGRME (71 aa)) are small ATPAse domain (RuvB-S). Residues 246 to 320 (ESGLDQMDRK…KAYRHLNLLG (75 aa)) form a head domain (RuvB-H) region. Residues Arg-301 and Arg-306 each coordinate DNA.

This sequence belongs to the RuvB family. In terms of assembly, homohexamer. Forms an RuvA(8)-RuvB(12)-Holliday junction (HJ) complex. HJ DNA is sandwiched between 2 RuvA tetramers; dsDNA enters through RuvA and exits via RuvB. An RuvB hexamer assembles on each DNA strand where it exits the tetramer. Each RuvB hexamer is contacted by two RuvA subunits (via domain III) on 2 adjacent RuvB subunits; this complex drives branch migration. In the full resolvosome a probable DNA-RuvA(4)-RuvB(12)-RuvC(2) complex forms which resolves the HJ.

The protein resides in the cytoplasm. The catalysed reaction is ATP + H2O = ADP + phosphate + H(+). Functionally, the RuvA-RuvB-RuvC complex processes Holliday junction (HJ) DNA during genetic recombination and DNA repair, while the RuvA-RuvB complex plays an important role in the rescue of blocked DNA replication forks via replication fork reversal (RFR). RuvA specifically binds to HJ cruciform DNA, conferring on it an open structure. The RuvB hexamer acts as an ATP-dependent pump, pulling dsDNA into and through the RuvAB complex. RuvB forms 2 homohexamers on either side of HJ DNA bound by 1 or 2 RuvA tetramers; 4 subunits per hexamer contact DNA at a time. Coordinated motions by a converter formed by DNA-disengaged RuvB subunits stimulates ATP hydrolysis and nucleotide exchange. Immobilization of the converter enables RuvB to convert the ATP-contained energy into a lever motion, pulling 2 nucleotides of DNA out of the RuvA tetramer per ATP hydrolyzed, thus driving DNA branch migration. The RuvB motors rotate together with the DNA substrate, which together with the progressing nucleotide cycle form the mechanistic basis for DNA recombination by continuous HJ branch migration. Branch migration allows RuvC to scan DNA until it finds its consensus sequence, where it cleaves and resolves cruciform DNA. This is Holliday junction branch migration complex subunit RuvB from Nitratidesulfovibrio vulgaris (strain ATCC 29579 / DSM 644 / CCUG 34227 / NCIMB 8303 / VKM B-1760 / Hildenborough) (Desulfovibrio vulgaris).